Consider the following 175-residue polypeptide: Peptide deformylase (175 aa).

Positions 98 and 140 each coordinate Fe cation. E141 is an active-site residue. H144 contacts Fe cation.

This sequence belongs to the polypeptide deformylase family. Requires Fe(2+) as cofactor.

It catalyses the reaction N-terminal N-formyl-L-methionyl-[peptide] + H2O = N-terminal L-methionyl-[peptide] + formate. Its function is as follows. Removes the formyl group from the N-terminal Met of newly synthesized proteins. Requires at least a dipeptide for an efficient rate of reaction. N-terminal L-methionine is a prerequisite for activity but the enzyme has broad specificity at other positions. In Bradyrhizobium sp. (strain BTAi1 / ATCC BAA-1182), this protein is Peptide deformylase.